A 350-amino-acid chain; its full sequence is Dihydroorotate dehydrogenase (quinone) (350 aa).

Residues 59–63 (AGLDK) and T83 contribute to the FMN site. Position 63 (K63) interacts with substrate. 108-112 (NRMGF) contributes to the substrate binding site. 2 residues coordinate FMN: N136 and N169. Residue N169 participates in substrate binding. S172 serves as the catalytic Nucleophile. N174 contributes to the substrate binding site. Residues K214 and T242 each contribute to the FMN site. 243–244 (NT) lines the substrate pocket. FMN-binding positions include G265, G294, and 315 to 316 (YS).

It belongs to the dihydroorotate dehydrogenase family. Type 2 subfamily. As to quaternary structure, monomer. The cofactor is FMN.

The protein resides in the cell membrane. It carries out the reaction (S)-dihydroorotate + a quinone = orotate + a quinol. Its pathway is pyrimidine metabolism; UMP biosynthesis via de novo pathway; orotate from (S)-dihydroorotate (quinone route): step 1/1. In terms of biological role, catalyzes the conversion of dihydroorotate to orotate with quinone as electron acceptor. This is Dihydroorotate dehydrogenase (quinone) from Aromatoleum aromaticum (strain DSM 19018 / LMG 30748 / EbN1) (Azoarcus sp. (strain EbN1)).